Reading from the N-terminus, the 617-residue chain is MKTFTLPASVLFCFLLLIRGLGAAPPGRSDVYPPPLGSEHNGQVAEDAVSRPKDDSVPEVRAARNSEPQDQGELFQGVDPRALAAVLLQALDRPASPPAVPAGSQQGTPEEAAEALLTESVRSQTHSLPASEIQASAVAPPRPQTQDNDPEADDRSEELEALASLLQELRDFSPSNAKRQQETAAAETETRTHTLTRVNLESPGPERVWRASWGEFQARVPERAPLPPSVPSQFQARMSENVPLPETHQFGEGVSSPKTHLGETLTPLSKAYQSLSAPFPKVRRLEGSFLGGSEAGERLLQQGLAQVEAGRRQAEATRQAAAQEERLADLASDLLLQYLLQGGARQRDLGGRGLQETQQERENEREEEAEQERRGGGEDEVGEEDEEAAEAEAEAEEAERARQNALLFAEEEDGEAGAEDKRSQEEAPGHRRKDAEGTEEGGEEDDDDEEMDPQTIDSLIELSTKLHLPADDVVSIIEEVEEKRKRKKNAPPEPVPPPRAAPAPTHVRSPQPPPPAPARDELPDWNEVLPPWDREEDEVFPPGPYHPFPNYIRPRTLQPPASSRRRHFHHALPPARHHPDLEAQARRAQEEADAEERRLQEQEELENYIEHVLLHRP.

An N-terminal signal peptide occupies residues 1-23 (MKTFTLPASVLFCFLLLIRGLGA). 4 disordered regions span residues 29 to 75 (SDVY…GELF), 94 to 113 (PASPPAVPAGSQQGTPEEAA), 121 to 157 (VRSQTHSLPASEIQASAVAPPRPQTQDNDPEADDRSE), and 169 to 192 (LRDFSPSNAKRQQETAAAETETRT). Basic and acidic residues predominate over residues 48-64 (AVSRPKDDSVPEVRAAR). Residues 148 to 157 (NDPEADDRSE) show a composition bias toward acidic residues. Position 180 is a pyrrolidone carboxylic acid (Gln-180). A compositionally biased stretch (low complexity) spans 182–192 (ETAAAETETRT). At Gln-313 the chain carries Pyrrolidone carboxylic acid. Residues 348-603 (DLGGRGLQET…AEERRLQEQE (256 aa)) are disordered. Residues 378–397 (EDEVGEEDEEAAEAEAEAEE) show a composition bias toward acidic residues. The segment covering 418–436 (AEDKRSQEEAPGHRRKDAE) has biased composition (basic and acidic residues). Residue Ser-423 is modified to Phosphoserine. A compositionally biased stretch (acidic residues) spans 437–452 (GTEEGGEEDDDDEEMD). Residues 491–501 (PPEPVPPPRAA) are compositionally biased toward pro residues. The segment covering 577–601 (HHPDLEAQARRAQEEADAEERRLQE) has biased composition (basic and acidic residues).

Interacts with HSPA8 on cell membrane. Interacts with C3AR1. Interacts with C1QBP. Post-translationally, multiple peptides are derived from VGF, with activities in synaptic plasticity, antidepression, penile erection, autonomic activation, and increases in energy expenditure. As to expression, central and peripheral nervous systems, synthesized exclusively in neuronal and neuroendocrine cells. VGF and several of the derived peptides are present in the brain.

Its subcellular location is the secreted. It is found in the cytoplasmic vesicle. The protein localises to the secretory vesicle. Its function is as follows. Secreted polyprotein that is packaged and proteolytically processed by prohormone convertases PCSK1 and PCSK2 in a cell-type-specific manner. VGF and peptides derived from its processing play many roles in neurogenesis and neuroplasticity associated with learning, memory, depression and chronic pain. Functionally, plays a role in the control of body fluid homeostasis by regulating vasopressin release. Suppresses presynaptic glutamatergic neurons connected to vasopressin neurons. In terms of biological role, plays a role in the control of body fluid homeostasis by regulating vasopressin release. Activates GABAergic interneurons which are inhibitory neurons of the nervous system and thereby suppresses presynaptic glutamatergic neurons. Also stimulates feeding behavior in an orexin-dependent manner in the hypothalamus. Functions as a positive regulator for the activation of orexin neurons resulting in elevated gastric acid secretion and gastric emptying. Secreted multifunctional neuropeptide that binds to different cell receptors and thereby plays multiple physiological roles including modulation of energy expenditure, pain, response to stress, gastric regulation, glucose homeostasis as well as lipolysis. Activates the G-protein-coupled receptor C3AR1 via a folding-upon-binding mechanism leading to enhanced lipolysis in adipocytes. Interacts with C1QBP receptor in macrophages and microglia causing increased levels of intracellular calcium and hypersensitivity. Its function is as follows. Plays a role in the regulation of memory formation and depression-related behaviors potentially by influencing synaptic plasticity and neurogenesis. Induces acute and transient activation of the NTRK2/TRKB receptor and subsequent CREB phosphorylation. Also induces insulin secretion in insulinoma cells by increasing intracellular calcium mobilization. The chain is Neurosecretory protein VGF (Vgf) from Rattus norvegicus (Rat).